A 183-amino-acid polypeptide reads, in one-letter code: ER membrane protein complex subunit 4 (183 aa).

Position 2 is an N-acetylthreonine (threonine 2). At 2–66 (TAQGGLVANR…VQETDRILVE (65 aa)) the chain is on the cytoplasmic side. Positions 20 to 39 (ELSGPGGGSRGRSDRGSGQG) are disordered. Position 36 is a phosphoserine (serine 36). A helical membrane pass occupies residues 67–87 (KRCWDIALGPLKQIPMNLFIM). Residues 88 to 98 (YMAGNTISIFP) are Lumenal-facing. The chain crosses the membrane as a helical span at residues 99–120 (TMMVCMMAWRPIQALMAISATF). Over 121 to 127 (KMLESSS) the chain is Cytoplasmic. The helical transmembrane segment at 128 to 148 (QKFLQGLVYLIGNLMGLALAV) threads the bilayer. Topologically, residues 149 to 183 (YKCQSMGLLPTHASDWLAFIEPPERMEFSGGGLLL) are lumenal.

This sequence belongs to the EMC4 family. Component of the ER membrane protein complex (EMC). As to expression, isoform 1 is expressed in brain and heart. Isoform 2 is expressed in heart.

It is found in the endoplasmic reticulum membrane. Its function is as follows. Part of the endoplasmic reticulum membrane protein complex (EMC) that enables the energy-independent insertion into endoplasmic reticulum membranes of newly synthesized membrane proteins. Preferentially accommodates proteins with transmembrane domains that are weakly hydrophobic or contain destabilizing features such as charged and aromatic residues. Involved in the cotranslational insertion of multi-pass membrane proteins in which stop-transfer membrane-anchor sequences become ER membrane spanning helices. It is also required for the post-translational insertion of tail-anchored/TA proteins in endoplasmic reticulum membranes. By mediating the proper cotranslational insertion of N-terminal transmembrane domains in an N-exo topology, with translocated N-terminus in the lumen of the ER, controls the topology of multi-pass membrane proteins like the G protein-coupled receptors. By regulating the insertion of various proteins in membranes, it is indirectly involved in many cellular processes. The polypeptide is ER membrane protein complex subunit 4 (EMC4) (Homo sapiens (Human)).